The primary structure comprises 513 residues: Teichoic acid ribitol-phosphate polymerase TarK (513 aa).

Belongs to the CDP-glycerol glycerophosphotransferase family.

The protein resides in the cell membrane. It carries out the reaction 4-O-[di(2R)-glycerylphospho]-N-acetyl-beta-D-mannosaminyl-(1-&gt;4)-N-acetyl-alpha-D-glucosaminyl di-trans,octa-cis-undecaprenyl diphosphate + n CDP-L-ribitol = 4-O-[(D-ribitylphospho)(n)-di{(2R)-glycerylphospho}]-N-acetyl-beta-D-mannosaminyl-(1-&gt;4)-N-acetyl-alpha-D-glucosaminyl di-trans,octa-cis-undecaprenyl diphosphate + n CMP + n H(+). The protein operates within cell wall biogenesis; poly(ribitol phosphate) teichoic acid biosynthesis. In terms of biological role, can catalyze the polymerization of the main chain of the major teichoic acid by sequential transfer of ribitol phosphate units from CDP-ribitol to the second glycerol phosphate attached to the disaccharide linkage unit. The protein is Teichoic acid ribitol-phosphate polymerase TarK (tarK) of Staphylococcus aureus (strain NCTC 8325 / PS 47).